The primary structure comprises 89 residues: uncharacterized protein (89 aa).

Residues 39–61 (FVCFWSIWFWTGDISFSLLSMLV) form a helical membrane-spanning segment.

It localises to the membrane. This is an uncharacterized protein from Saccharomyces cerevisiae (strain ATCC 204508 / S288c) (Baker's yeast).